Reading from the N-terminus, the 239-residue chain is DNA repair protein RecO (239 aa).

It belongs to the RecO family.

In terms of biological role, involved in DNA repair and RecF pathway recombination. In Bifidobacterium animalis subsp. lactis (strain AD011), this protein is DNA repair protein RecO.